Reading from the N-terminus, the 186-residue chain is MATKYEMSKTYQYRKVMKPLLERKRRARINKCLDELKDLMAECVAQTGDAKFEKADILEVTVQHLRKLKESKKHVPANPEQSFRAGYIRAANEVSRALASLPRVDVAFGTTLMTHLGMRLNQLEQPMEQPQAVNTPLSIVCGSSSSSSTYSSASSCSSISPVSSGYASDNESLLQISSPGQVWRPW.

The region spanning 13–68 (YRKVMKPLLERKRRARINKCLDELKDLMAECVAQTGDAKFEKADILEVTVQHLRKL) is the bHLH domain. Positions 83 to 116 (FRAGYIRAANEVSRALASLPRVDVAFGTTLMTHL) constitute an Orange domain. The WRPW motif motif lies at 183 to 186 (WRPW).

Transcription repression requires formation of a complex with a corepressor protein (Groucho). Forms homodimers.

The protein localises to the nucleus. Its function is as follows. Participates in the control of cell fate choice by uncommitted neuroectodermal cells in the embryo. Transcriptional repressor. Binds DNA on N-box motifs: 5'-CACNAG-3'. The sequence is that of Enhancer of split m7 protein from Drosophila melanogaster (Fruit fly).